We begin with the raw amino-acid sequence, 639 residues long: NADP-dependent malic enzyme, chloroplastic (639 aa).

The transit peptide at 1-49 (MLSARAAATAAAAAASPLWKRGEGGSSGSGSGCTSCREVRRRAAAVRVR) directs the protein to the chloroplast. The segment at 15 to 34 (ASPLWKRGEGGSSGSGSGCT) is disordered. The active-site Proton donor is the Tyr-187. Residue Arg-240 participates in NAD(+) binding. The active-site Proton acceptor is the Lys-258. A divalent metal cation contacts are provided by Glu-330, Asp-331, and Asp-354. Residue Asp-354 participates in NAD(+) binding. Position 383 to 399 (383 to 399 (LFLGAGEAGTGIAELIA)) interacts with NADP(+). Asn-495 is a binding site for NAD(+).

This sequence belongs to the malic enzymes family. As to quaternary structure, homotetramer. Requires Mg(2+) as cofactor. It depends on Mn(2+) as a cofactor.

The protein resides in the plastid. It is found in the chloroplast. It carries out the reaction (S)-malate + NADP(+) = pyruvate + CO2 + NADPH. The enzyme catalyses oxaloacetate + H(+) = pyruvate + CO2. It participates in photosynthesis; C4 acid pathway. Functionally, the chloroplastic ME isoform decarboxylates malate shuttled from neighboring mesophyll cells. The CO(2) released is then refixed by ribulose-bisphosphate carboxylase. This pathway eliminates the photorespiratory loss of CO(2) that occurs in most plants. The polypeptide is NADP-dependent malic enzyme, chloroplastic (ME6) (Oryza sativa subsp. japonica (Rice)).